We begin with the raw amino-acid sequence, 291 residues long: 33 kDa chaperonin (291 aa).

Cystine bridges form between cysteine 229/cysteine 231 and cysteine 262/cysteine 265.

This sequence belongs to the HSP33 family. Under oxidizing conditions two disulfide bonds are formed involving the reactive cysteines. Under reducing conditions zinc is bound to the reactive cysteines and the protein is inactive.

Its subcellular location is the cytoplasm. In terms of biological role, redox regulated molecular chaperone. Protects both thermally unfolding and oxidatively damaged proteins from irreversible aggregation. Plays an important role in the bacterial defense system toward oxidative stress. The chain is 33 kDa chaperonin from Aliivibrio fischeri (strain ATCC 700601 / ES114) (Vibrio fischeri).